A 364-amino-acid polypeptide reads, in one-letter code: Probable mannose-1-phosphate guanylyltransferase 2 (364 aa).

GDP-alpha-D-mannose-binding residues include Leu-6 and Val-7. Gly-9, Gly-11, Thr-12, Arg-13, and Lys-23 together coordinate diphosphate. 5 residues coordinate GDP-alpha-D-mannose: Gly-88, Asn-112, Asp-114, Gly-149, and Asn-176.

This sequence belongs to the transferase hexapeptide repeat family.

It catalyses the reaction alpha-D-mannose 1-phosphate + GTP + H(+) = GDP-alpha-D-mannose + diphosphate. Its pathway is nucleotide-sugar biosynthesis; GDP-alpha-D-mannose biosynthesis; GDP-alpha-D-mannose from alpha-D-mannose 1-phosphate (GTP route): step 1/1. Its function is as follows. Catalyzes a reaction of the Smirnoff-Wheeler pathway, the major route to ascorbate biosynthesis in plants. This Arabidopsis thaliana (Mouse-ear cress) protein is Probable mannose-1-phosphate guanylyltransferase 2.